The following is a 131-amino-acid chain: D-ribose pyranase (131 aa).

The active-site Proton donor is His-20. Substrate is bound by residues Asp-28, His-98, and Tyr-120–Asn-122.

Belongs to the RbsD / FucU family. RbsD subfamily. In terms of assembly, homodecamer.

The protein localises to the cytoplasm. It carries out the reaction beta-D-ribopyranose = beta-D-ribofuranose. It participates in carbohydrate metabolism; D-ribose degradation; D-ribose 5-phosphate from beta-D-ribopyranose: step 1/2. In terms of biological role, catalyzes the interconversion of beta-pyran and beta-furan forms of D-ribose. In Bacillus mycoides (strain KBAB4) (Bacillus weihenstephanensis), this protein is D-ribose pyranase.